The primary structure comprises 361 residues: POU domain, class 3, transcription factor 4 (361 aa).

Disordered regions lie at residues P99–L131 and M144–D192. A compositionally biased stretch (polar residues) spans P122–L131. Over residues V165–H183 the composition is skewed to basic and acidic residues. The 75-residue stretch at E186–D260 folds into the POU-specific domain. Residue S265 is modified to Phosphoserine. The segment at residues K278–T337 is a DNA-binding region (homeobox).

Belongs to the POU transcription factor family. Class-3 subfamily. As to quaternary structure, interacts with HNRNPU. In terms of tissue distribution, brain specific.

It is found in the nucleus. Functionally, probable transcription factor which exert its primary action widely during early neural development and in a very limited set of neurons in the mature brain. This Homo sapiens (Human) protein is POU domain, class 3, transcription factor 4 (POU3F4).